We begin with the raw amino-acid sequence, 90 residues long: Phosphocarrier protein HPr (90 aa).

An HPr domain is found at 1–89; it reads MPAREITIIN…ELINNFFDEG (89 aa). His15 functions as the Pros-phosphohistidine intermediate in the catalytic mechanism.

This sequence belongs to the HPr family.

It is found in the cytoplasm. General (non sugar-specific) component of the phosphoenolpyruvate-dependent sugar phosphotransferase system (sugar PTS). This major carbohydrate active-transport system catalyzes the phosphorylation of incoming sugar substrates concomitantly with their translocation across the cell membrane. The phosphoryl group from phosphoenolpyruvate (PEP) is transferred to the phosphoryl carrier protein HPr by enzyme I. Phospho-HPr then transfers it to the PTS EIIA domain. This Pseudomonas putida (Arthrobacter siderocapsulatus) protein is Phosphocarrier protein HPr (ptsH).